A 397-amino-acid chain; its full sequence is Acetate kinase (397 aa).

Position 9 (N9) interacts with Mg(2+). K16 is an ATP binding site. R87 is a binding site for substrate. D144 (proton donor/acceptor) is an active-site residue. Residues 204–208 (HLGNG), 279–281 (DCR), and 327–331 (GIGEN) contribute to the ATP site. E381 is a binding site for Mg(2+).

This sequence belongs to the acetokinase family. In terms of assembly, homodimer. Requires Mg(2+) as cofactor. The cofactor is Mn(2+).

The protein resides in the cytoplasm. It carries out the reaction acetate + ATP = acetyl phosphate + ADP. Its pathway is metabolic intermediate biosynthesis; acetyl-CoA biosynthesis; acetyl-CoA from acetate: step 1/2. Its function is as follows. Catalyzes the formation of acetyl phosphate from acetate and ATP. Can also catalyze the reverse reaction. The protein is Acetate kinase of Chromobacterium violaceum (strain ATCC 12472 / DSM 30191 / JCM 1249 / CCUG 213 / NBRC 12614 / NCIMB 9131 / NCTC 9757 / MK).